The following is a 348-amino-acid chain: GMP reductase 2 (348 aa).

NADP(+) contacts are provided by residues serine 26–arginine 27, lysine 78, aspartate 129–alanine 131, and isoleucine 180–glycine 181. The K(+) site is built by glycine 181, glycine 183, and cysteine 186. Catalysis depends on cysteine 186, which acts as the Thioimidate intermediate. Catalysis depends on threonine 188, which acts as the Proton donor/acceptor. A K(+)-binding site is contributed by arginine 189. GMP is bound by residues aspartate 219 to glycine 221, glycine 242 to glycine 243, glycine 268 to serine 270, and arginine 286 to glycine 290. Residues methionine 269 and tyrosine 285–arginine 286 each bind NADP(+). N6-acetyllysine is present on lysine 291. An NADP(+)-binding site is contributed by serine 314 to threonine 317.

The protein belongs to the IMPDH/GMPR family. GuaC type 1 subfamily. As to quaternary structure, homotetramer. Highly expressed in heart, skeletal muscle, kidney, brain, liver, prostate, spleen, placenta, testis and ovary. Low expression in colon, thymus and peripheral blood leukocytes.

The enzyme catalyses IMP + NH4(+) + NADP(+) = GMP + NADPH + 2 H(+). Catalyzes the irreversible NADPH-dependent deamination of GMP to IMP. It functions in the conversion of nucleobase, nucleoside and nucleotide derivatives of G to A nucleotides, and in maintaining the intracellular balance of A and G nucleotides. Plays a role in modulating cellular differentiation. In Homo sapiens (Human), this protein is GMP reductase 2.